An 84-amino-acid polypeptide reads, in one-letter code: Dolichol phosphate-mannose biosynthesis regulatory protein (84 aa).

The next 2 helical transmembrane spans lie at phenylalanine 11–leucine 31 and tyrosine 49–isoleucine 69.

The protein belongs to the DPM2 family. As to quaternary structure, component of the dolichol-phosphate mannose (DPM) synthase complex composed of DPM1, DPM2 and DPM3; in the complex interacts directly with DPM3. Component of the glycosylphosphatidylinositol-N-acetylglucosaminyltransferase (GPI-GnT) complex composed at least by PIGA, PIGC, PIGH, PIGP, PIGQ, PIGY and DPM2. Interacts with PIGA, PIGC and PIGQ.

The protein resides in the endoplasmic reticulum membrane. Its pathway is protein modification; protein glycosylation. In terms of biological role, regulates the biosynthesis of dolichol phosphate-mannose. Regulatory subunit of the dolichol-phosphate mannose (DPM) synthase complex; essential for the ER localization and stable expression of DPM1. Part of the glycosylphosphatidylinositol-N-acetylglucosaminyltransferase (GPI-GnT) complex that catalyzes the transfer of N-acetylglucosamine from UDP-N-acetylglucosamine to phosphatidylinositol and participates in the first step of GPI biosynthesis. May act by regulating the GPI-GNT complex. The sequence is that of Dolichol phosphate-mannose biosynthesis regulatory protein from Mus musculus (Mouse).